Reading from the N-terminus, the 335-residue chain is Aspartate carbamoyltransferase catalytic subunit (335 aa).

Positions 54 and 55 each coordinate carbamoyl phosphate. Lys82 is an L-aspartate binding site. Carbamoyl phosphate contacts are provided by Arg104, His134, and Gln137. The L-aspartate site is built by Arg177 and Arg232. Residues Gly277 and Pro278 each contribute to the carbamoyl phosphate site.

This sequence belongs to the aspartate/ornithine carbamoyltransferase superfamily. ATCase family. Heterododecamer (2C3:3R2) of six catalytic PyrB chains organized as two trimers (C3), and six regulatory PyrI chains organized as three dimers (R2).

The enzyme catalyses carbamoyl phosphate + L-aspartate = N-carbamoyl-L-aspartate + phosphate + H(+). The protein operates within pyrimidine metabolism; UMP biosynthesis via de novo pathway; (S)-dihydroorotate from bicarbonate: step 2/3. In terms of biological role, catalyzes the condensation of carbamoyl phosphate and aspartate to form carbamoyl aspartate and inorganic phosphate, the committed step in the de novo pyrimidine nucleotide biosynthesis pathway. The protein is Aspartate carbamoyltransferase catalytic subunit of Paenarthrobacter aurescens (strain TC1).